A 266-amino-acid chain; its full sequence is 15-hydroxyprostaglandin dehydrogenase [NAD(+)] (266 aa).

Residues 12–20 (GAAQGIGKA), 36–37 (DW), 63–65 (CDV), and asparagine 91 contribute to the NAD(+) site. Substrate is bound by residues serine 138 and glutamine 148. Residue tyrosine 151 is the Proton acceptor of the active site. Residues 151 to 155 (YCASK) and 186 to 188 (VKT) contribute to the NAD(+) site.

Belongs to the short-chain dehydrogenases/reductases (SDR) family. Homodimer.

It localises to the cytoplasm. It carries out the reaction prostaglandin E2 + NAD(+) = 15-oxoprostaglandin E2 + NADH + H(+). It catalyses the reaction (15S)-hydroxy-(5Z,8Z,11Z,13E)-eicosatetraenoate + NAD(+) = 15-oxo-(5Z,8Z,11Z,13E)-eicosatetraenoate + NADH + H(+). The enzyme catalyses (11R)-hydroxy-(5Z,8Z,12E,14Z)-eicosatetraenoate + NAD(+) = 11-oxo-(5Z,8Z,12E,14Z)-eicosatetraenoate + NADH + H(+). The catalysed reaction is lipoxin A4 + NAD(+) = 15-oxo-(5S,6R)-dihydroxy-(7E,9E,11Z,13E)-eicosatetraenoate + NADH + H(+). It carries out the reaction 15-oxo-(5S,6R)-dihydroxy-(7E,9E,11Z)-eicosatrienoate + NADH + H(+) = (5S,6R,15S)-trihydroxy-(7E,9E,11Z)-eicosatrienoate + NAD(+). It catalyses the reaction prostaglandin A1 + NAD(+) = 15-oxo-prostaglandin A1 + NADH + H(+). The enzyme catalyses prostaglandin E1 + NAD(+) = 15-oxoprostaglandin E1 + NADH + H(+). The catalysed reaction is 14-hydroxy-(4Z,7Z,10Z,12E,16Z,19Z)-docosahexaenoate + NAD(+) = 14-oxo-(4Z,7Z,10Z,12E,16Z,19Z)-docosahexaenoate + NADH + H(+). It carries out the reaction resolvin E1 + NAD(+) = 18-oxo-resolvin E1 + NADH + H(+). It catalyses the reaction resolvin D1 + NAD(+) = 8-oxoresolvin D1 + NADH + H(+). The enzyme catalyses resolvin D1 + NAD(+) = 17-oxoresolvin D1 + NADH + H(+). The catalysed reaction is resolvin D2 + NAD(+) = 7-oxoresolvin D2 + NADH + H(+). It carries out the reaction resolvin D2 + NAD(+) = 16-oxoresolvin D2 + NADH + H(+). Catalyzes the NAD-dependent dehydrogenation (oxidation) of a broad array of hydroxylated polyunsaturated fatty acids (mainly eicosanoids and docosanoids, including prostaglandins, lipoxins and resolvins), yielding their corresponding keto (oxo) metabolites. Decreases the levels of the pro-proliferative prostaglandins such as prostaglandin E2 (whose activity is increased in cancer because of an increase in the expression of cyclooxygenase 2) and generates oxo-fatty acid products that can profoundly influence cell function by abrogating pro-inflammatory cytokine expression. Converts resolvins E1, D1 and D2 to their oxo products, which represents a mode of resolvin inactivation. Resolvin E1 plays important roles during the resolution phase of acute inflammation, while resolvins D1 and D2 have a unique role in obesity-induced adipose inflammation. In Rattus norvegicus (Rat), this protein is 15-hydroxyprostaglandin dehydrogenase [NAD(+)] (Hpgd).